Consider the following 343-residue polypeptide: UDP-3-O-(3-hydroxymyristoyl)glucosamine N-acyltransferase (343 aa).

Histidine 239 acts as the Proton acceptor in catalysis.

This sequence belongs to the transferase hexapeptide repeat family. LpxD subfamily. Homotrimer.

The enzyme catalyses a UDP-3-O-[(3R)-3-hydroxyacyl]-alpha-D-glucosamine + a (3R)-hydroxyacyl-[ACP] = a UDP-2-N,3-O-bis[(3R)-3-hydroxyacyl]-alpha-D-glucosamine + holo-[ACP] + H(+). The catalysed reaction is UDP-3-O-[(3R)-3-hydroxytetradecanoyl]-alpha-D-glucosamine + (3R)-hydroxytetradecanoyl-[ACP] = UDP-2-N,3-O-bis[(3R)-3-hydroxytetradecanoyl]-alpha-D-glucosamine + holo-[ACP] + H(+). It participates in glycolipid biosynthesis; lipid IV(A) biosynthesis; lipid IV(A) from (3R)-3-hydroxytetradecanoyl-[acyl-carrier-protein] and UDP-N-acetyl-alpha-D-glucosamine: step 3/6. Catalyzes the N-acylation of UDP-3-O-(hydroxytetradecanoyl)glucosamine using 3-hydroxytetradecanoyl-ACP as the acyl donor. Is involved in the biosynthesis of lipid A, a phosphorylated glycolipid that anchors the lipopolysaccharide to the outer membrane of the cell. This is UDP-3-O-(3-hydroxymyristoyl)glucosamine N-acyltransferase from Blochmanniella pennsylvanica (strain BPEN).